The chain runs to 962 residues: Glycine dehydrogenase (decarboxylating) (962 aa).

The residue at position 709 (lysine 709) is an N6-(pyridoxal phosphate)lysine.

Belongs to the GcvP family. In terms of assembly, the glycine cleavage system is composed of four proteins: P, T, L and H. Requires pyridoxal 5'-phosphate as cofactor.

The catalysed reaction is N(6)-[(R)-lipoyl]-L-lysyl-[glycine-cleavage complex H protein] + glycine + H(+) = N(6)-[(R)-S(8)-aminomethyldihydrolipoyl]-L-lysyl-[glycine-cleavage complex H protein] + CO2. Its function is as follows. The glycine cleavage system catalyzes the degradation of glycine. The P protein binds the alpha-amino group of glycine through its pyridoxal phosphate cofactor; CO(2) is released and the remaining methylamine moiety is then transferred to the lipoamide cofactor of the H protein. The chain is Glycine dehydrogenase (decarboxylating) from Shewanella amazonensis (strain ATCC BAA-1098 / SB2B).